A 307-amino-acid polypeptide reads, in one-letter code: MADLQERGHLLTEQVNPLSQNLDQLSSLELVELFNSEDLKTVEAVAAAKVQIATAIEQTADRLRQGGRLFYVGAGTSGRLGVLDAAECPPTFCTPPELVQGIIAGGAGALVRSSEDLEDRAEDGDAAIAQRHITQLDVVVGITAGGTTPFVQGAINSARQRGALTIFIACVPAEQVSFTADIDIRLLTGPEILAGSTRLKAGTVTKLTLNILSTGVMVKLGKVYGNRMVDVAVTNQKLRDRALRILQDLTGLSREAAGFLLERSSKWVKLALVMHWTGLDKDAGDRLLSAHQGNLREAVASYKNQND.

Residues 59–222 form the SIS domain; that stretch reads TADRLRQGGR…STGVMVKLGK (164 aa). E87 serves as the catalytic Proton donor. E118 is an active-site residue.

Belongs to the GCKR-like family. MurNAc-6-P etherase subfamily. Homodimer.

It catalyses the reaction N-acetyl-D-muramate 6-phosphate + H2O = N-acetyl-D-glucosamine 6-phosphate + (R)-lactate. It participates in amino-sugar metabolism; N-acetylmuramate degradation. Functionally, specifically catalyzes the cleavage of the D-lactyl ether substituent of MurNAc 6-phosphate, producing GlcNAc 6-phosphate and D-lactate. The chain is N-acetylmuramic acid 6-phosphate etherase from Nostoc sp. (strain PCC 7120 / SAG 25.82 / UTEX 2576).